A 219-amino-acid polypeptide reads, in one-letter code: Chalcone--flavanone isomerase (219 aa).

Residues T50, N115, and S188 each contribute to the substrate site.

Belongs to the chalcone isomerase family.

It catalyses the reaction a chalcone = a flavanone.. It functions in the pathway secondary metabolite biosynthesis; flavonoid biosynthesis. Catalyzes the intramolecular cyclization of bicyclic chalcones into tricyclic (S)-flavanones. Responsible for the isomerization of 4,2',4',6'-tetrahydroxychalcone (also termed chalcone) into naringenin. This Clitoria ternatea (Butterfly pea) protein is Chalcone--flavanone isomerase (CHI).